The primary structure comprises 817 residues: MANIAHLIVSGLLAATVAHGQQYEGSSRSEDAFSYVQPRNTTILGQYGHSPAVLPSPNSTGSGGWQAAHTKARHFVSQLTLEEKADMVTGQPGPCVGNIVAIPRLGFNGLCLQDGPLAIRVADYASVFSAGVTAASTWDRDVLYERAFAMGQEFRAKGAHIALGPVAGPLGRSAYGGRNWEGFAADPYLTGVAMELSVKGYHDAGVQATPKHFIGNEQETQRNPIYNPNGTITDVLQEAVSSNIDDRTMHELYLWPFANAAHAKAAAFMCSYQRLNGSYACQNSKALNGLLKEELGFQGYVMSDWGGTHSGVASIESGLDMNMPGGLGPYGTIPQAGSFYGGNVTQGVKNGTIDEARVDDMIIRIMTPYYWLGQDKDFPSVDPSSADLNTFSPRSTWLRQFNLTGERNRDVRGDHAKIIRRQAAEATVLLKNEKNALPLKSPKSLAIFGNDAGEPTMGAVNQANFEFGTLAAGGGSGTGRFTYVVSPLEAIQSRAKQANTLVQYWMNNTDIATTDVTTLWVPAPPDACLVFLKTWAEEGEDREYLHVDYDGNDVVSSVASKCNNTIVVTHSSGINELPFADHPNVTAILAAHYPGQESGNSIVDVLYGDVNPSGRLPYTIARNGSEYNAPPTTEVTTTGAEDWQAWFNEKLEIDYRYFDAHNISVLYEFGFGLSYTTFNLSEINAEPLVESISSVPEQRPIQPGGNPALWENVYNVSVVVTNTGDVEGKAVPQLYVTFPDSTPAGTPPKQLRGFDKVALKPGQSQAASFQLMRRDLSYWDVVSQQWLIPEGEFVISVGFSSRDLREVVRVTPVSGST.

Positions 1–20 (MANIAHLIVSGLLAATVAHG) are cleaved as a signal peptide. N-linked (GlcNAc...) asparagine glycosylation is found at asparagine 40, asparagine 58, asparagine 229, and asparagine 276. Aspartate 304 is a catalytic residue. 10 N-linked (GlcNAc...) asparagine glycosylation sites follow: asparagine 343, asparagine 350, asparagine 402, asparagine 507, asparagine 563, asparagine 584, asparagine 623, asparagine 662, asparagine 679, and asparagine 715.

Belongs to the glycosyl hydrolase 3 family.

The protein localises to the secreted. The catalysed reaction is Hydrolysis of terminal, non-reducing beta-D-glucosyl residues with release of beta-D-glucose.. The protein operates within glycan metabolism; cellulose degradation. Its function is as follows. Beta-glucosidases are one of a number of cellulolytic enzymes involved in the degradation of cellulosic biomass. Catalyzes the last step releasing glucose from the inhibitory cellobiose. The polypeptide is Probable beta-glucosidase G (bglG) (Aspergillus terreus (strain NIH 2624 / FGSC A1156)).